The primary structure comprises 495 residues: Protein nucleotidyltransferase YdiU (495 aa).

Residues Gly92, Gly94, Arg95, Lys114, Asp126, Gly127, Arg177, and Arg184 each coordinate ATP. The active-site Proton acceptor is Asp261. Mg(2+) contacts are provided by Asn262 and Asp271. ATP is bound at residue Asp271.

Belongs to the SELO family. Requires Mg(2+) as cofactor. It depends on Mn(2+) as a cofactor.

The catalysed reaction is L-seryl-[protein] + ATP = 3-O-(5'-adenylyl)-L-seryl-[protein] + diphosphate. The enzyme catalyses L-threonyl-[protein] + ATP = 3-O-(5'-adenylyl)-L-threonyl-[protein] + diphosphate. It catalyses the reaction L-tyrosyl-[protein] + ATP = O-(5'-adenylyl)-L-tyrosyl-[protein] + diphosphate. It carries out the reaction L-histidyl-[protein] + UTP = N(tele)-(5'-uridylyl)-L-histidyl-[protein] + diphosphate. The catalysed reaction is L-seryl-[protein] + UTP = O-(5'-uridylyl)-L-seryl-[protein] + diphosphate. The enzyme catalyses L-tyrosyl-[protein] + UTP = O-(5'-uridylyl)-L-tyrosyl-[protein] + diphosphate. Functionally, nucleotidyltransferase involved in the post-translational modification of proteins. It can catalyze the addition of adenosine monophosphate (AMP) or uridine monophosphate (UMP) to a protein, resulting in modifications known as AMPylation and UMPylation. The protein is Protein nucleotidyltransferase YdiU of Bordetella bronchiseptica (strain ATCC BAA-588 / NCTC 13252 / RB50) (Alcaligenes bronchisepticus).